A 465-amino-acid chain; its full sequence is uncharacterized protein (465 aa).

Disordered regions lie at residues 95–173, 407–426, and 443–465; these read STST…RKDP, QEMEGKRNESKSDDEGKSDK, and ANPIETARMARRNRRSKGSSSKK. The segment covering 118–137 has biased composition (basic residues); the sequence is KTGSKKVTRSKKSKKTKRRS. Over residues 138-150 the composition is skewed to low complexity; it reads STTVTTTTISNSK. Positions 153 to 173 are enriched in basic and acidic residues; the sequence is TPDKDKDSKDQRKQRTKRKDP. Residues 451–465 show a composition bias toward basic residues; the sequence is MARRNRRSKGSSSKK.

This is an uncharacterized protein from Caenorhabditis elegans.